A 94-amino-acid polypeptide reads, in one-letter code: MDLRVIEKDDAELTIEVAGENHTFMNVLKGTLLETDGVTAASYDMNPEQSGGQTEPLLTIKTDGDVDPVDALQAAAGHTSQKLQSFADTFEAAV.

This sequence belongs to the archaeal Rpo11/eukaryotic RPB11/RPC19 RNA polymerase subunit family. In terms of assembly, part of the RNA polymerase complex.

The protein localises to the cytoplasm. It catalyses the reaction RNA(n) + a ribonucleoside 5'-triphosphate = RNA(n+1) + diphosphate. In terms of biological role, DNA-dependent RNA polymerase (RNAP) catalyzes the transcription of DNA into RNA using the four ribonucleoside triphosphates as substrates. This Halobacterium salinarum (strain ATCC 700922 / JCM 11081 / NRC-1) (Halobacterium halobium) protein is DNA-directed RNA polymerase subunit Rpo11.